A 486-amino-acid polypeptide reads, in one-letter code: uncharacterized protein (486 aa).

The signal sequence occupies residues 1–25 (MGTMRSVYLIIIIILFFAFISLSFG). Basic and acidic residues-rich tracts occupy residues 306 to 316 (KKEEKENEESS) and 326 to 349 (KKEE…KQEK). Positions 306–349 (KKEEKENEESSKTINQMQRHKKEEKSQTQETKKPSKNEMNKQEK) are disordered.

This is an uncharacterized protein from Methanocaldococcus jannaschii (strain ATCC 43067 / DSM 2661 / JAL-1 / JCM 10045 / NBRC 100440) (Methanococcus jannaschii).